Consider the following 311-residue polypeptide: Olfactory receptor 2M4 (311 aa).

Residues methionine 1 to threonine 25 lie on the Extracellular side of the membrane. An N-linked (GlcNAc...) asparagine glycan is attached at asparagine 5. The chain crosses the membrane as a helical span at residues phenylalanine 26–isoleucine 49. Residues tyrosine 50–threonine 57 lie on the Cytoplasmic side of the membrane. Residues proline 58–proline 79 form a helical membrane-spanning segment. The Extracellular segment spans residues lysine 80–glutamine 100. An intrachain disulfide couples cysteine 97 to cysteine 189. The chain crosses the membrane as a helical span at residues isoleucine 101 to tyrosine 120. Topologically, residues aspartate 121 to lysine 139 are cytoplasmic. A helical transmembrane segment spans residues leucine 140–isoleucine 158. Residues valine 159–phenylalanine 195 are Extracellular-facing. A helical membrane pass occupies residues glutamate 196–serine 219. Residues histidine 220–lysine 236 lie on the Cytoplasmic side of the membrane. Residues alanine 237–tyrosine 259 traverse the membrane as a helical segment. At methionine 260 to lysine 272 the chain is on the extracellular side. The helical transmembrane segment at methionine 273 to leucine 292 threads the bilayer. The Cytoplasmic segment spans residues arginine 293–isoleucine 311.

It belongs to the G-protein coupled receptor 1 family.

The protein localises to the cell membrane. Its function is as follows. Odorant receptor. The protein is Olfactory receptor 2M4 (OR2M4) of Homo sapiens (Human).